Reading from the N-terminus, the 612-residue chain is DNA mismatch repair protein MutL (612 aa).

It belongs to the DNA mismatch repair MutL/HexB family.

In terms of biological role, this protein is involved in the repair of mismatches in DNA. It is required for dam-dependent methyl-directed DNA mismatch repair. May act as a 'molecular matchmaker', a protein that promotes the formation of a stable complex between two or more DNA-binding proteins in an ATP-dependent manner without itself being part of a final effector complex. The polypeptide is DNA mismatch repair protein MutL (Bartonella quintana (strain Toulouse) (Rochalimaea quintana)).